A 230-amino-acid chain; its full sequence is MGIDVAENTGEIYSNLAPREKLLAYGSVSLTDAELLAIFLRTGTRGLPVLRMAEFLLKEFGSLYHLLSADYDTFCSHKGMGLAKYAQLQAIAELAKRFFSSQFMHEDIMSSPSVTQEYLQNLLSGRDREIFVVLFLNNQNRVICHEEMFKGTINKVEVHPREIVRSAIKVNASSVILAHNHPSGHAEPSLADKIVTDKVIDACNLVGVKVLDHLVIGRQCCVSFAERGWI.

In terms of domain architecture, MPN spans 108–230 (IMSSPSVTQE…CVSFAERGWI (123 aa)). Residues histidine 179, histidine 181, and aspartate 192 each contribute to the Zn(2+) site. The short motif at 179–192 (HNHPSGHAEPSLAD) is the JAMM motif element.

It belongs to the UPF0758 family. YicR subfamily.

The protein is UPF0758 protein plu4865 of Photorhabdus laumondii subsp. laumondii (strain DSM 15139 / CIP 105565 / TT01) (Photorhabdus luminescens subsp. laumondii).